Reading from the N-terminus, the 467-residue chain is Sodium-dependent phosphate transport protein 1 (467 aa).

Residues asparagine 41, asparagine 49, and asparagine 58 are each glycosylated (N-linked (GlcNAc...) asparagine). Helical transmembrane passes span 81 to 101, 119 to 139, 178 to 198, 200 to 220, 257 to 277, 301 to 321, 339 to 359, 365 to 385, 401 to 421, and 433 to 453; these read GIIL…VGYF, SVLS…VVVC, FLLG…SLGW, MVFY…FVLF, AILK…FFWS, GFLS…AGQL, LFTA…PYLS, IVIF…GVFI, CSTL…GLIL, and FILM…VATA.

This sequence belongs to the major facilitator superfamily. Sodium/anion cotransporter family. In terms of assembly, interacts with PDZK1. In terms of tissue distribution, expressed in kidney cortex, liver and brain but not in other tissues.

The protein resides in the apical cell membrane. The catalysed reaction is 3 Na(+)(out) + phosphate(out) = 3 Na(+)(in) + phosphate(in). The enzyme catalyses urate(out) = urate(in). Functionally, important for the resorption of phosphate by the kidney. May be involved in actively transporting phosphate into cells via Na(+) cotransport in the renal brush border membrane. Plays a role in urate transport in the kidney. The protein is Sodium-dependent phosphate transport protein 1 (SLC17A1) of Homo sapiens (Human).